The following is a 232-amino-acid chain: Multiple organellar RNA editing factor 6, mitochondrial (232 aa).

Residues 1-67 (MAKTLSRSTA…TIRTRMDRSG (67 aa)) constitute a mitochondrion transit peptide. The segment at 208–232 (TNQRGSDKPKYHDRIRNVRRRENMR) is disordered. Over residues 212–232 (GSDKPKYHDRIRNVRRRENMR) the composition is skewed to basic and acidic residues.

The protein belongs to the MORF family. In terms of assembly, heterodimers with MORF8/RIP1, MORF3/RIP3, MORF6/RIP6, MORF7/RIP7 and MORF9/RIP9.

The protein resides in the mitochondrion. Its function is as follows. Involved in organellar RNA editing. Required for the processing of few RNA editing sites in mitochondria. The protein is Multiple organellar RNA editing factor 6, mitochondrial of Arabidopsis thaliana (Mouse-ear cress).